The chain runs to 421 residues: 2-deoxystreptamine N-acetyl-D-glucosaminyltransferase (421 aa).

This sequence belongs to the glycosyltransferase group 1 family. Glycosyltransferase 4 subfamily.

It carries out the reaction 2-deoxystreptamine + UDP-N-acetyl-alpha-D-glucosamine = 2'-N-acetylparomamine + UDP + H(+). The protein operates within antibiotic biosynthesis; neomycin biosynthesis. In terms of biological role, glycosyltransferase involved in the biosynthesis of neomycin by mediating conversion of 2-deoxystreptamine (2-DOS) to 2'-N-acetylparomamine using UDP-alpha-D-glucosamine as sugar donor. This chain is 2-deoxystreptamine N-acetyl-D-glucosaminyltransferase (neoD), found in Streptomyces fradiae (Streptomyces roseoflavus).